The chain runs to 239 residues: Carboxy-S-adenosyl-L-methionine synthase (239 aa).

S-adenosyl-L-methionine-binding positions include tyrosine 35, 64-66 (GCS), 88-89 (DN), and arginine 195.

Belongs to the class I-like SAM-binding methyltransferase superfamily. Cx-SAM synthase family. As to quaternary structure, homodimer.

The catalysed reaction is prephenate + S-adenosyl-L-methionine = carboxy-S-adenosyl-L-methionine + 3-phenylpyruvate + H2O. Catalyzes the conversion of S-adenosyl-L-methionine (SAM) to carboxy-S-adenosyl-L-methionine (Cx-SAM). In Helicobacter pylori (strain Shi470), this protein is Carboxy-S-adenosyl-L-methionine synthase.